The sequence spans 191 residues: Threonylcarbamoyl-AMP synthase (191 aa).

A YrdC-like domain is found at 10–191; it reads VPKLTQCVRT…DLYTDAIIRA (182 aa).

This sequence belongs to the SUA5 family. TsaC subfamily.

The protein resides in the cytoplasm. The enzyme catalyses L-threonine + hydrogencarbonate + ATP = L-threonylcarbamoyladenylate + diphosphate + H2O. Required for the formation of a threonylcarbamoyl group on adenosine at position 37 (t(6)A37) in tRNAs that read codons beginning with adenine. Catalyzes the conversion of L-threonine, HCO(3)(-)/CO(2) and ATP to give threonylcarbamoyl-AMP (TC-AMP) as the acyladenylate intermediate, with the release of diphosphate. The sequence is that of Threonylcarbamoyl-AMP synthase from Saccharophagus degradans (strain 2-40 / ATCC 43961 / DSM 17024).